Reading from the N-terminus, the 231-residue chain is tRNA (guanine-N(7)-)-methyltransferase (231 aa).

Positions 62, 87, 114, and 136 each coordinate S-adenosyl-L-methionine. Asp136 is an active-site residue. Residues Lys140, Asp172, and 210-213 each bind substrate; that span reads TRYE.

It belongs to the class I-like SAM-binding methyltransferase superfamily. TrmB family.

The enzyme catalyses guanosine(46) in tRNA + S-adenosyl-L-methionine = N(7)-methylguanosine(46) in tRNA + S-adenosyl-L-homocysteine. Its pathway is tRNA modification; N(7)-methylguanine-tRNA biosynthesis. Its function is as follows. Catalyzes the formation of N(7)-methylguanine at position 46 (m7G46) in tRNA. This is tRNA (guanine-N(7)-)-methyltransferase from Zymomonas mobilis subsp. mobilis (strain ATCC 31821 / ZM4 / CP4).